The sequence spans 48 residues: Sperm protamine R3 isoform 2 (48 aa).

Positions 1–29 (ARRRHSMKKKRKSVRRRKTRKNQRKRKNS) are enriched in basic residues. Residues 1–48 (ARRRHSMKKKRKSVRRRKTRKNQRKRKNSLGRSFKAHGFLKQPPRFRP) form a disordered region.

As to expression, testis.

The protein localises to the nucleus. Its subcellular location is the chromosome. In terms of biological role, protamines substitute for histones in the chromatin of sperm during the haploid phase of spermatogenesis. They compact sperm DNA into a highly condensed, stable and inactive complex. This chain is Sperm protamine R3 isoform 2, found in Hydrolagus colliei (Spotted ratfish).